The primary structure comprises 442 residues: Inhibitor of Apoptosis OPG037 (442 aa).

6 ANK repeats span residues 67-96, 100-131, 203-233, 237-267, 292-321, and 323-347; these read DGNY…DPNA, HNKT…KINN, DGNT…DVNK, FGDS…VITD, YDST…ICED, and MYYA…SVDS.

This sequence belongs to the orthopoxvirus OPG037 family. May interact with host caspase-9-Apaf-1 complex.

It localises to the host cytoplasm. Inhibits host apoptosis. Acts by associating with host apoptosome. This is Inhibitor of Apoptosis OPG037 (OPG037) from Monkeypox virus.